Here is a 353-residue protein sequence, read N- to C-terminus: Protein CEPU-1 (353 aa).

Residues M1–P28 form the signal peptide. 3 consecutive Ig-like C2-type domains span residues P37–S124, P134–T216, and P220–T314. N42, N68, and N150 each carry an N-linked (GlcNAc...) asparagine glycan. C55 and C113 are disulfide-bonded. Cystine bridges form between C155-C199 and C241-C293. N-linked (GlcNAc...) asparagine glycosylation is found at N282, N290, and N303. S330 carries GPI-anchor amidated serine lipidation. Positions G331–F353 are cleaved as a propeptide — removed in mature form.

This sequence belongs to the immunoglobulin superfamily. IgLON family. As to quaternary structure, interacts with NEGR1. As to expression, found on the dendrites, somata and axons of developing Purkinje cells. Undetectable on other neurons like Golgi or granule cells.

Its subcellular location is the cell membrane. It may be a cellular address molecule specific to Purkinje cells. It may represent a receptor or a subunit of a receptor complex. The sequence is that of Protein CEPU-1 from Gallus gallus (Chicken).